We begin with the raw amino-acid sequence, 106 residues long: uORF protein (106 aa).

Basic and acidic residues predominate over residues 1 to 19 (MDLETRVSGHEKPQRRNPE). The tract at residues 1-31 (MDLETRVSGHEKPQRRNPEDPDCQYAKTRSS) is disordered.

The protein localises to the host cytoplasm. It is found in the host cytoskeleton. Functionally, plays a role in viral replication. The chain is uORF protein from Zika virus (ZIKV).